The following is a 277-amino-acid chain: Putative envelope-preserving system protein Rv2742c (277 aa).

Residues 31–54 (RDENRQRHAQVDVQRRRDQPERGQ) show a composition bias toward basic and acidic residues. Disordered regions lie at residues 31-70 (RDENRQRHAQVDVQRRRDQPERGQHQHRRNRDADHHPDGR), 113-133 (QGSPRRRERRRGQTAHQRLGR), and 180-210 (RQGSGRRGLGSRSGAGVPQGADARGWRHTAD). Basic residues predominate over residues 116–133 (PRRRERRRGQTAHQRLGR).

Interacts with Rv2743c.

Involved in preservation of envelope integrity and tolerance to surface stress. Reverses the inhibitory effect of PspA on ClgR activity. Facilitates intracellular growth of M.tuberculosis. In Mycobacterium tuberculosis (strain ATCC 25618 / H37Rv), this protein is Putative envelope-preserving system protein Rv2742c.